We begin with the raw amino-acid sequence, 750 residues long: Photosystem I P700 chlorophyll a apoprotein A1 (750 aa).

8 helical membrane-spanning segments follow: residues 70–93 (VFSA…FHGA), 156–179 (LYCT…FHYH), 195–219 (LNHH…HVSL), 291–309 (IAHH…GHMY), 346–369 (WHAQ…HHMY), 385–411 (LSLF…IFMV), 433–455 (AIIS…LYIH), and 531–549 (FLVH…LILL). [4Fe-4S] cluster is bound by residues Cys573 and Cys582. 2 helical membrane-spanning segments follow: residues 589-610 (HVFL…HFSW) and 664-686 (LSAY…MFLF). His675 contacts chlorophyll a'. Residues Met683 and Tyr691 each contribute to the chlorophyll a site. Trp692 lines the phylloquinone pocket. The chain crosses the membrane as a helical span at residues 724–744 (AVGVTHYLLGGIATTWAFFLA).

The protein belongs to the PsaA/PsaB family. In terms of assembly, the PsaA/B heterodimer binds the P700 chlorophyll special pair and subsequent electron acceptors. PSI consists of a core antenna complex that captures photons, and an electron transfer chain that converts photonic excitation into a charge separation. The eukaryotic PSI reaction center is composed of at least 11 subunits. P700 is a chlorophyll a/chlorophyll a' dimer, A0 is one or more chlorophyll a, A1 is one or both phylloquinones and FX is a shared 4Fe-4S iron-sulfur center. is required as a cofactor.

The protein resides in the plastid. It localises to the chloroplast thylakoid membrane. It catalyses the reaction reduced [plastocyanin] + hnu + oxidized [2Fe-2S]-[ferredoxin] = oxidized [plastocyanin] + reduced [2Fe-2S]-[ferredoxin]. Its function is as follows. PsaA and PsaB bind P700, the primary electron donor of photosystem I (PSI), as well as the electron acceptors A0, A1 and FX. PSI is a plastocyanin-ferredoxin oxidoreductase, converting photonic excitation into a charge separation, which transfers an electron from the donor P700 chlorophyll pair to the spectroscopically characterized acceptors A0, A1, FX, FA and FB in turn. Oxidized P700 is reduced on the lumenal side of the thylakoid membrane by plastocyanin. The protein is Photosystem I P700 chlorophyll a apoprotein A1 of Morus indica (Mulberry).